Consider the following 172-residue polypeptide: Co-chaperone protein HscB homolog (172 aa).

One can recognise a J domain in the interval 2–74 (NHFELFGLVE…LRRAEYLLSL (73 aa)).

It belongs to the HscB family. Interacts with HscA and stimulates its ATPase activity.

Functionally, co-chaperone involved in the maturation of iron-sulfur cluster-containing proteins. Seems to help targeting proteins to be folded toward HscA. The protein is Co-chaperone protein HscB homolog of Aeromonas salmonicida (strain A449).